The chain runs to 421 residues: MPFLHGFRRIIFEYQPLVDAILGSLGIQDPERQESLDRPSYVASEESRILVLTELLERKAHSPFYQEGVSNALLKMAELGLTRAADVLLRHGANLNFEDPVTYYTALHIAVLRNQPDMVELLVHHGADVNRRDRIHESSPLDLASEEPERLPCLQRLLDLGADVNAADKHGKTALLHALASSDGVQIHNTENIRLLLEGGADVKATTKDGDTVFTCIIFLLGETVGGDKEEAQMINRFCFQVTRLLLAHGADPSECPAHESLTHICLKSFKLHFPLLRFLLESGAAYNCSLHGASCWSGFHIIFERLCSHPGCTEDESHADLLRKAETVLDLMVTNSQKLQLPENFDIHPVGSLAEKIQALHFSLRQLESYPPPLKHLCRVAIRLYLQPWPVDVKVKALPLPDRLKWYLLSEHSGSVEDDI.

ANK repeat units lie at residues 67–97 (EGVS…NLNF), 102–131 (TYYT…DVNR), 136–166 (HESS…DVNA), 170–205 (HGKT…DVKA), 226–255 (GGDK…DPSE), and 260–289 (ESLT…AYNC). The 56-residue stretch at 360–415 (ALHFSLRQLESYPPPLKHLCRVAIRLYLQPWPVDVKVKALPLPDRLKWYLLSEHSG) folds into the SOCS box domain.

Belongs to the ankyrin SOCS box (ASB) family. In terms of assembly, binds APS. Identified in a complex with ELOB and ELOC. Interacts with CUL5 and RNF7. Interacts with SQSTM1. Ubiquitinated by RNF41; leading to proteasomal degradation.

The protein resides in the cytoplasm. The protein operates within protein modification; protein ubiquitination. In terms of biological role, probable substrate-recognition component of a SCF-like ECS (Elongin-Cullin-SOCS-box protein) E3 ubiquitin-protein ligase complex which mediates the ubiquitination and subsequent proteasomal degradation of target proteins. May play a role in the regulation of cell proliferation and autophagy by promoting the ubiquitination and degradation of SQSTM1. This Homo sapiens (Human) protein is Ankyrin repeat and SOCS box protein 6 (ASB6).